Consider the following 235-residue polypeptide: 2-C-methyl-D-erythritol 4-phosphate cytidylyltransferase (235 aa).

The protein belongs to the IspD/TarI cytidylyltransferase family. IspD subfamily. As to quaternary structure, homodimer.

The catalysed reaction is 2-C-methyl-D-erythritol 4-phosphate + CTP + H(+) = 4-CDP-2-C-methyl-D-erythritol + diphosphate. The protein operates within isoprenoid biosynthesis; isopentenyl diphosphate biosynthesis via DXP pathway; isopentenyl diphosphate from 1-deoxy-D-xylulose 5-phosphate: step 2/6. Its function is as follows. Catalyzes the formation of 4-diphosphocytidyl-2-C-methyl-D-erythritol from CTP and 2-C-methyl-D-erythritol 4-phosphate (MEP). The protein is 2-C-methyl-D-erythritol 4-phosphate cytidylyltransferase of Blochmanniella pennsylvanica (strain BPEN).